The sequence spans 798 residues: Penicillin-binding protein 1A (798 aa).

Topologically, residues 1–9 (MIKKIVTTC) are cytoplasmic. A helical; Signal-anchor for type II membrane protein transmembrane segment spans residues 10–30 (FGLVLGLCVFGVGLVAIAILV). At 31-798 (TYPKLPSLDS…SKQPQLDSLF (768 aa)) the chain is on the periplasmic side. Positions 50-218 (LTIYSADGEV…SAYNPIVNPE (169 aa)) are transglycosylase. The Proton donor; for transglycosylase activity role is filled by Glu-88. Residues 414-700 (VVVQEPLLQA…GTIAVPVWVD (287 aa)) form a transpeptidase region. The active-site Acyl-ester intermediate; for transpeptidase activity is Ser-461. Residues 751–798 (SRRIREDKEAGAEDVERGAADEVRQEVQETPVLPSNTGSKQPQLDSLF) are disordered. Residues 753-777 (RIREDKEAGAEDVERGAADEVRQEV) show a composition bias toward basic and acidic residues. The span at 783–798 (LPSNTGSKQPQLDSLF) shows a compositional bias: polar residues.

It in the N-terminal section; belongs to the glycosyltransferase 51 family. This sequence in the C-terminal section; belongs to the transpeptidase family.

It is found in the cell inner membrane. The catalysed reaction is [GlcNAc-(1-&gt;4)-Mur2Ac(oyl-L-Ala-gamma-D-Glu-L-Lys-D-Ala-D-Ala)](n)-di-trans,octa-cis-undecaprenyl diphosphate + beta-D-GlcNAc-(1-&gt;4)-Mur2Ac(oyl-L-Ala-gamma-D-Glu-L-Lys-D-Ala-D-Ala)-di-trans,octa-cis-undecaprenyl diphosphate = [GlcNAc-(1-&gt;4)-Mur2Ac(oyl-L-Ala-gamma-D-Glu-L-Lys-D-Ala-D-Ala)](n+1)-di-trans,octa-cis-undecaprenyl diphosphate + di-trans,octa-cis-undecaprenyl diphosphate + H(+). It catalyses the reaction Preferential cleavage: (Ac)2-L-Lys-D-Ala-|-D-Ala. Also transpeptidation of peptidyl-alanyl moieties that are N-acyl substituents of D-alanine.. The protein operates within cell wall biogenesis; peptidoglycan biosynthesis. Functionally, cell wall formation. Synthesis of cross-linked peptidoglycan from the lipid intermediates. The enzyme has a penicillin-insensitive transglycosylase N-terminal domain (formation of linear glycan strands) and a penicillin-sensitive transpeptidase C-terminal domain (cross-linking of the peptide subunits). In Neisseria cinerea, this protein is Penicillin-binding protein 1A (mrcA).